Here is a 146-residue protein sequence, read N- to C-terminus: Large ribosomal subunit protein bL21 (146 aa).

Residues 115 to 146 form a disordered region; sequence KSISLGKSAPKSSAKKETVKKETKPKSEKSTN. Over residues 128–146 the composition is skewed to basic and acidic residues; the sequence is AKKETVKKETKPKSEKSTN.

The protein belongs to the bacterial ribosomal protein bL21 family. In terms of assembly, part of the 50S ribosomal subunit. Contacts protein L20.

This protein binds to 23S rRNA in the presence of protein L20. This is Large ribosomal subunit protein bL21 from Prochlorococcus marinus (strain MIT 9312).